Here is a 488-residue protein sequence, read N- to C-terminus: Glutamate--tRNA ligase (488 aa).

Residues 11–21 (PSPTGQIHIGN) carry the 'HIGH' region motif. Zn(2+) is bound by residues Cys-108, Cys-110, Cys-135, and Asp-137. The 'KMSKS' region motif lies at 252–256 (KLSKR). Lys-255 lines the ATP pocket.

Belongs to the class-I aminoacyl-tRNA synthetase family. Glutamate--tRNA ligase type 1 subfamily. In terms of assembly, monomer. Zn(2+) is required as a cofactor.

The protein localises to the cytoplasm. It catalyses the reaction tRNA(Glu) + L-glutamate + ATP = L-glutamyl-tRNA(Glu) + AMP + diphosphate. In terms of biological role, catalyzes the attachment of glutamate to tRNA(Glu) in a two-step reaction: glutamate is first activated by ATP to form Glu-AMP and then transferred to the acceptor end of tRNA(Glu). The sequence is that of Glutamate--tRNA ligase from Natranaerobius thermophilus (strain ATCC BAA-1301 / DSM 18059 / JW/NM-WN-LF).